The sequence spans 312 residues: MNWLNNVVRPKIRSILKRETPENLWIKCPDSGQLVFYKDVEANQFVIPGSNYHMRMGATARLKSIFDNETWFDVALPDVAADPLKFRDERRYADRIKDARAKTGMNDAVKVGYGRIESTPAVVAVQDFDFMGGSLGMAAGEAIVTGLQLAVEKHAPFIMFAASGGARMQEGILSLMQMPRTTVAIQLLREAGLPYIVVLTNPTTGGVTASYAMLGDVQLAEPGALIGFAGARVIEQTIREKLPEGFQRAEYLKEHGMVDMVVHRHEMRPTLARLCRLLMKVPAPHADEVAAPPPPDVEGPPPAAEPVALPPA.

A CoA carboxyltransferase N-terminal domain is found at 24–293; sequence LWIKCPDSGQ…PHADEVAAPP (270 aa). Residues 286–312 are disordered; that stretch reads ADEVAAPPPPDVEGPPPAAEPVALPPA. Pro residues predominate over residues 291 to 312; it reads APPPPDVEGPPPAAEPVALPPA.

This sequence belongs to the AccD/PCCB family. As to quaternary structure, acetyl-CoA carboxylase is a heterohexamer composed of biotin carboxyl carrier protein (AccB), biotin carboxylase (AccC) and two subunits each of ACCase subunit alpha (AccA) and ACCase subunit beta (AccD).

The protein localises to the cytoplasm. It carries out the reaction N(6)-carboxybiotinyl-L-lysyl-[protein] + acetyl-CoA = N(6)-biotinyl-L-lysyl-[protein] + malonyl-CoA. Its pathway is lipid metabolism; malonyl-CoA biosynthesis; malonyl-CoA from acetyl-CoA: step 1/1. Functionally, component of the acetyl coenzyme A carboxylase (ACC) complex. Biotin carboxylase (BC) catalyzes the carboxylation of biotin on its carrier protein (BCCP) and then the CO(2) group is transferred by the transcarboxylase to acetyl-CoA to form malonyl-CoA. The protein is Acetyl-coenzyme A carboxylase carboxyl transferase subunit beta of Afipia carboxidovorans (strain ATCC 49405 / DSM 1227 / KCTC 32145 / OM5) (Oligotropha carboxidovorans).